Consider the following 327-residue polypeptide: Elongation factor P--(R)-beta-lysine ligase (327 aa).

Substrate is bound at residue 80–82 (SPE). ATP is bound by residues 104-106 (RNE) and N113. Y122 lines the substrate pocket. Position 246–247 (246–247 (EL)) interacts with ATP. E253 is a substrate binding site. G302 contacts ATP.

Belongs to the class-II aminoacyl-tRNA synthetase family. EpmA subfamily. In terms of assembly, homodimer.

It catalyses the reaction D-beta-lysine + L-lysyl-[protein] + ATP = N(6)-((3R)-3,6-diaminohexanoyl)-L-lysyl-[protein] + AMP + diphosphate + H(+). Functionally, with EpmB is involved in the beta-lysylation step of the post-translational modification of translation elongation factor P (EF-P). Catalyzes the ATP-dependent activation of (R)-beta-lysine produced by EpmB, forming a lysyl-adenylate, from which the beta-lysyl moiety is then transferred to the epsilon-amino group of a conserved specific lysine residue in EF-P. This is Elongation factor P--(R)-beta-lysine ligase from Haemophilus ducreyi (strain 35000HP / ATCC 700724).